Here is a 324-residue protein sequence, read N- to C-terminus: uncharacterized protein (324 aa).

A run of 8 helical transmembrane segments spans residues 5–24 (VIGILASLFFAVTFILNRAM), 39–61 (FIFMVPFLCLIVIMRGTFTPLLL), 68–90 (FYWIKWSFVGFVLFYAPITFAAA), 95–117 (WLIAGTWQITIVAGVLLSPLFYV), 130–152 (QKIPLVSLGTSVIILIGAALIQL), 162–179 (MLLFSVLPVVIAAFAYPL), 199–218 (LGMTLASLPFWLILAAYGWW), and 228–250 (TVQSFIVAVSSGIIATVLFFWAT).

Its subcellular location is the cell membrane. This is an uncharacterized protein from Bacillus subtilis (strain 168).